A 389-amino-acid chain; its full sequence is MGIKGLNKLLMEHCPAALRSSEIKNFGGRKVAIDASMSLYQFVIAVRQADGQQLTNENGETTSHLMGMFYRTLRMVDNGIKPVYVFDGKPPVLKSGELAKRKERREEALKKIEELKQQVEDGEEGEETKEAQEDVTRFEKRTVRVTPEQNDEAKKLLTLMGIPIVEAPCEAEAQCAKLAEAGKVYAAASEDMDTLCFGSPVLLRHLTFSEAKKMPISEINFAKILEGLEMTHAQFIDLCILLGCDYADTIRGVGPQTALKLMKEHGSLEKIVEHIEKNPSGKLKVPENWPYQEVRALLQAPDVLDSSSCDIKWNNPDVEGLVDFLVRDKGFSEDRVRAGAARLMKQVKVKPQARLDGFFKVMPKEGGEKRKADDKKTKGKKPATKKAKK.

Residues methionine 1–arginine 105 form an N-domain region. Residue aspartate 34 coordinates Mg(2+). DNA contacts are provided by arginine 47 and arginine 71. Residues aspartate 87, glutamate 170, glutamate 172, aspartate 191, and aspartate 193 each coordinate Mg(2+). The interval aspartate 134–histidine 265 is I-domain. Glutamate 170 contacts DNA. Residues glycine 243 and aspartate 245 each coordinate DNA. Aspartate 245 contributes to the Mg(2+) binding site. An interaction with PCNA region spans residues proline 351–phenylalanine 359. Positions lysine 360–lysine 389 are disordered. The span at methionine 362–lysine 376 shows a compositional bias: basic and acidic residues. A compositionally biased stretch (basic residues) spans threonine 377 to lysine 389.

Belongs to the XPG/RAD2 endonuclease family. FEN1 subfamily. As to quaternary structure, interacts with PCNA. Three molecules of FEN1 bind to one PCNA trimer with each molecule binding to one PCNA monomer. PCNA stimulates the nuclease activity without altering cleavage specificity. Mg(2+) serves as cofactor. Post-translationally, phosphorylated. Phosphorylation upon DNA damage induces relocalization to the nuclear plasma.

The protein resides in the nucleus. It localises to the nucleolus. The protein localises to the nucleoplasm. Its subcellular location is the mitochondrion. Its function is as follows. Structure-specific nuclease with 5'-flap endonuclease and 5'-3' exonuclease activities involved in DNA replication and repair. During DNA replication, cleaves the 5'-overhanging flap structure that is generated by displacement synthesis when DNA polymerase encounters the 5'-end of a downstream Okazaki fragment. It enters the flap from the 5'-end and then tracks to cleave the flap base, leaving a nick for ligation. Also involved in the long patch base excision repair (LP-BER) pathway, by cleaving within the apurinic/apyrimidinic (AP) site-terminated flap. Acts as a genome stabilization factor that prevents flaps from equilibrating into structures that lead to duplications and deletions. Also possesses 5'-3' exonuclease activity on nicked or gapped double-stranded DNA, and exhibits RNase H activity. Also involved in replication and repair of rDNA and in repairing mitochondrial DNA. The chain is Flap endonuclease 1 from Yarrowia lipolytica (strain CLIB 122 / E 150) (Yeast).